Here is a 237-residue protein sequence, read N- to C-terminus: Demethylmenaquinone methyltransferase (237 aa).

S-adenosyl-L-methionine contacts are provided by residues Thr58, Asp79, and 107-108 (NA).

This sequence belongs to the class I-like SAM-binding methyltransferase superfamily. MenG/UbiE family.

It carries out the reaction a 2-demethylmenaquinol + S-adenosyl-L-methionine = a menaquinol + S-adenosyl-L-homocysteine + H(+). It participates in quinol/quinone metabolism; menaquinone biosynthesis; menaquinol from 1,4-dihydroxy-2-naphthoate: step 2/2. Methyltransferase required for the conversion of demethylmenaquinol (DMKH2) to menaquinol (MKH2). The sequence is that of Demethylmenaquinone methyltransferase from Lactiplantibacillus plantarum (strain ATCC BAA-793 / NCIMB 8826 / WCFS1) (Lactobacillus plantarum).